An 892-amino-acid chain; its full sequence is Alanine--tRNA ligase (892 aa).

Positions 596, 600, 700, and 704 each coordinate Zn(2+).

Belongs to the class-II aminoacyl-tRNA synthetase family. It depends on Zn(2+) as a cofactor.

The protein resides in the cytoplasm. It carries out the reaction tRNA(Ala) + L-alanine + ATP = L-alanyl-tRNA(Ala) + AMP + diphosphate. Its function is as follows. Catalyzes the attachment of alanine to tRNA(Ala) in a two-step reaction: alanine is first activated by ATP to form Ala-AMP and then transferred to the acceptor end of tRNA(Ala). Also edits incorrectly charged Ser-tRNA(Ala) and Gly-tRNA(Ala) via its editing domain. This chain is Alanine--tRNA ligase, found in Methanococcus maripaludis (strain C5 / ATCC BAA-1333).